The sequence spans 172 residues: MPGNSGNDRSVVVGRVSGAFGVRGWVKAVSFTDPPVNLVGYRPWTLRRGDAERRADVLEGREHGNAVIVRLQGVDTREQAEALKGFEVTVRRSQLPPPAPGEYYRVDLVGLKVVNLGETVLGEVVDVMETGANDVLVVQGDRERLLPFVQGVFVKSVNLEESRIVVDWDPGF.

The region spanning 100-172 (PGEYYRVDLV…RIVVDWDPGF (73 aa)) is the PRC barrel domain.

It belongs to the RimM family. In terms of assembly, binds ribosomal protein uS19.

The protein resides in the cytoplasm. An accessory protein needed during the final step in the assembly of 30S ribosomal subunit, possibly for assembly of the head region. Essential for efficient processing of 16S rRNA. May be needed both before and after RbfA during the maturation of 16S rRNA. It has affinity for free ribosomal 30S subunits but not for 70S ribosomes. The chain is Ribosome maturation factor RimM from Methylococcus capsulatus (strain ATCC 33009 / NCIMB 11132 / Bath).